Reading from the N-terminus, the 571-residue chain is Proline--tRNA ligase (571 aa).

The protein belongs to the class-II aminoacyl-tRNA synthetase family. ProS type 1 subfamily. In terms of assembly, homodimer.

The protein localises to the cytoplasm. It catalyses the reaction tRNA(Pro) + L-proline + ATP = L-prolyl-tRNA(Pro) + AMP + diphosphate. In terms of biological role, catalyzes the attachment of proline to tRNA(Pro) in a two-step reaction: proline is first activated by ATP to form Pro-AMP and then transferred to the acceptor end of tRNA(Pro). As ProRS can inadvertently accommodate and process non-cognate amino acids such as alanine and cysteine, to avoid such errors it has two additional distinct editing activities against alanine. One activity is designated as 'pretransfer' editing and involves the tRNA(Pro)-independent hydrolysis of activated Ala-AMP. The other activity is designated 'posttransfer' editing and involves deacylation of mischarged Ala-tRNA(Pro). The misacylated Cys-tRNA(Pro) is not edited by ProRS. This Actinobacillus pleuropneumoniae serotype 5b (strain L20) protein is Proline--tRNA ligase.